The chain runs to 312 residues: Probable myosin light chain kinase DDB_G0282429 (312 aa).

The disordered stretch occupies residues 1–28 (MDRMDSSDEEIDNISDDELQSGDEIEVE). Residues 7–27 (SDEEIDNISDDELQSGDEIEV) show a composition bias toward acidic residues. A Protein kinase domain is found at 38–290 (YILGNEIGRG…FEQCLIHPWV (253 aa)). ATP-binding positions include 44–52 (IGRGAFSIV) and K67. D158 (proton acceptor) is an active-site residue.

This sequence belongs to the protein kinase superfamily. CAMK Ser/Thr protein kinase family. CaMK subfamily.

It carries out the reaction L-seryl-[myosin light chain] + ATP = O-phospho-L-seryl-[myosin light chain] + ADP + H(+). The enzyme catalyses L-threonyl-[myosin light chain] + ATP = O-phospho-L-threonyl-[myosin light chain] + ADP + H(+). With respect to regulation, does not have a calmodulin-binding domain. In terms of biological role, may phosphorylate a specific serine in the N-terminus of a myosin light chain. This is Probable myosin light chain kinase DDB_G0282429 from Dictyostelium discoideum (Social amoeba).